We begin with the raw amino-acid sequence, 104 residues long: Complex III assembly factor LYRM7 (104 aa).

Ser60 is modified (phosphoserine).

This sequence belongs to the complex I LYR family. As to quaternary structure, interacts with UQCRFS1.

It localises to the mitochondrion matrix. In terms of biological role, assembly factor required for Rieske Fe-S protein UQCRFS1 incorporation into the cytochrome b-c1 (CIII) complex. Functions as a chaperone, binding to this subunit within the mitochondrial matrix and stabilizing it prior to its translocation and insertion into the late CIII dimeric intermediate within the mitochondrial inner membrane. The protein is Complex III assembly factor LYRM7 (LYRM7) of Bos taurus (Bovine).